Consider the following 231-residue polypeptide: Urease accessory protein UreE (231 aa).

The interval 185-231 (VASPLDEPHGSGLHIHGIHSHGEGHSHGDHDHDHSHSHGDHDHDHKH) is disordered. The span at 204 to 231 (SHGEGHSHGDHDHDHSHSHGDHDHDHKH) shows a compositional bias: basic and acidic residues.

Belongs to the UreE family.

It localises to the cytoplasm. Functionally, involved in urease metallocenter assembly. Binds nickel. Probably functions as a nickel donor during metallocenter assembly. The polypeptide is Urease accessory protein UreE (Yersinia pseudotuberculosis serotype O:1b (strain IP 31758)).